The following is a 213-amino-acid chain: Superoxide dismutase [Fe] (213 aa).

Fe cation is bound by residues His28, His82, Asp164, and His168.

Belongs to the iron/manganese superoxide dismutase family. As to quaternary structure, homotetramer. Fe cation is required as a cofactor.

It carries out the reaction 2 superoxide + 2 H(+) = H2O2 + O2. In terms of biological role, destroys superoxide anion radicals which are normally produced within the cells and which are toxic to biological systems. This is Superoxide dismutase [Fe] (sodB) from Aquifex pyrophilus.